Reading from the N-terminus, the 126-residue chain is Protein ApaG (126 aa).

The ApaG domain maps to 2-126 (SALDNSIRVE…FRLATPGLLH (125 aa)).

The chain is Protein ApaG from Shewanella oneidensis (strain ATCC 700550 / JCM 31522 / CIP 106686 / LMG 19005 / NCIMB 14063 / MR-1).